A 1051-amino-acid chain; its full sequence is MTAELQQDDSAGAADGHGSSCQMLLNQLREITGIQDPSFLHEALKASNGDITQAVSLLTDQRVKEPSHDTTAAEPSEVEESATSKDLLAKVIDLTHDNKDDLQAAIALSLLESPNIQADNRDLNRAHEANSAETKRSKRKRCEVWGENHNPNNWRRVDGWPVGLKNVGNTCWFSAVIQSLFQLPEFRRLVLSYNLPQNILENCRSHTEKRNIMFMQELQYLFALLLGSNRKFVDPSAALDLLKGAFRSSEEQQQDVSEFTHKLLDWLEDAFQLAVNVNSHLRNKSENPMVQLFYGTFLTEGVREGKPFCNNETFGQYPLQVNGYHNLDECLEGAMVEGDIALLPSDRSVKYGQERWFTKLPPVLTFELSRFEFNQSLGQPEKIHNKLEFPQIIYMDRYMYKSKELIRSKRESVRKLKEEIQVLQQKLERYVKYGSGPSRFPLPDMLKYVIEFASTKPASESCLSGSAEHVTLPLPSVHCPISDLTPKESSSPESCSQNAGSTFSSPEDALPSSEGMNGPFTSPHSSLETPAPPAPRTVTDEEMNFVKTCLQRWRSEIEQDIQDLKNCISSSTKAIEQMYCDPLLRQVPYRLHAVLVHEGQASAGHYWAYIYNQPRQTWLKYNDISVTESSWEELERDSYGGLRNVSAYCLMYINDNLPHFSAEASSNESDETAGEVEALSVELRQYIQEDNWRFQQEVEEWEEEQSCKIPQMESSPNSSSQDFSTSQESPAVSSHEVRCLSSEHAVIAKEQTAQAIANTAHAYEKSGVEAALSEAFHEEYSRLYQLAKETPTSHSDPRLQHVLVYFFQNEAPKRVVERTLLEQFADRNLSYDERSISIMKVAQAKLMEIGPDDMNMEEYKRWHEDYSLFRKVSVYLLTGLELFQKGKYQEALSYLVYAYQSNAGLLVKGPRRGVKESVIALYRRKCLLELNAKAASLFETNDDHSVTEGINVMNELIIPCIHLIINNDISKDDLDAIEVMRNHWCSYLGKDIAENLQLCLGEFLPRLLDPSAEIIVLKEPPTIRPNSPYDLCNRFAAVMESIQGVSTVTVK.

The interval 60-82 (DQRVKEPSHDTTAAEPSEVEESA) is disordered. Phosphoserine is present on S67. In terms of domain architecture, UIM spans 97-116 (DNKDDLQAAIALSLLESPNI). Residue K99 forms a Glycyl lysine isopeptide (Lys-Gly) (interchain with G-Cter in SUMO2) linkage. The segment covering 121 to 135 (RDLNRAHEANSAETK) has biased composition (basic and acidic residues). Residues 121–140 (RDLNRAHEANSAETKRSKRK) are disordered. The USP domain occupies 162–655 (VGLKNVGNTC…SAYCLMYIND (494 aa)). C171 acts as the Nucleophile in catalysis. At S376 the chain carries Phosphoserine. A disordered region spans residues 483–538 (DLTPKESSSPESCSQNAGSTFSSPEDALPSSEGMNGPFTSPHSSLETPAPPAPRTV). Composition is skewed to polar residues over residues 487–505 (KESSSPESCSQNAGSTFSS) and 519–528 (PFTSPHSSLE). S555 is subject to Phosphoserine. H605 serves as the catalytic Proton acceptor. The tract at residues 703-735 (EEQSCKIPQMESSPNSSSQDFSTSQESPAVSSH) is disordered. A compositionally biased stretch (low complexity) spans 713–730 (ESSPNSSSQDFSTSQESP). S720 is subject to Phosphoserine. Position 1022 is a phosphothreonine (T1022).

This sequence belongs to the peptidase C19 family. USP28 subfamily. As to quaternary structure, interacts with ZNF304. Interacts with PRKD1. Interacts with TP53BP1. Interacts with FBXW7; following DNA damage, dissociates from FBXW7 leading to degradation of MYC. Degraded upon nickel ion level or hypoxia exposure. Post-translationally, phosphorylated upon DNA damage at Ser-67 and Ser-720, by ATM or ATR. Phosphorylated by PRKD1.

The protein resides in the nucleus. It localises to the nucleoplasm. The enzyme catalyses Thiol-dependent hydrolysis of ester, thioester, amide, peptide and isopeptide bonds formed by the C-terminal Gly of ubiquitin (a 76-residue protein attached to proteins as an intracellular targeting signal).. Its function is as follows. Deubiquitinase involved in DNA damage response checkpoint and MYC proto-oncogene stability. Involved in DNA damage induced apoptosis by specifically deubiquitinating proteins of the DNA damage pathway such as CLSPN. Also involved in G2 DNA damage checkpoint, by deubiquitinating CLSPN, and preventing its degradation by the anaphase promoting complex/cyclosome (APC/C). In contrast, it does not deubiquitinate PLK1. Specifically deubiquitinates MYC in the nucleoplasm, leading to prevent MYC degradation by the proteasome: acts by specifically interacting with FBXW7 (FBW7alpha) in the nucleoplasm and counteracting ubiquitination of MYC by the SCF(FBXW7) complex. Deubiquitinates ZNF304, hence preventing ZNF304 degradation by the proteasome and leading to the activated KRAS-mediated promoter hypermethylation and transcriptional silencing of tumor suppressor genes (TSGs) in a subset of colorectal cancers (CRC) cells. The polypeptide is Ubiquitin carboxyl-terminal hydrolase 28 (Usp28) (Mus musculus (Mouse)).